The chain runs to 456 residues: MADGGSERADGRIVKMEVDYSPTVDQRLPECAKLAKEGRLQEVIETLLSLEKQTRTASDMVSTSRILVAVVKMCYEAKEWDLLNENIMLLSKRRSQLKQAVAKMVQQCCTYVEEITDLPIKLRLIDTLRMVTEGKIYVEIERARLTKTLATIKEQNGDVKEAASILQELQVETYGSMEKKERVEFILEQMRLCLAVKDYIRTQIISKKINTKFFQEENTEKLKLKYYNLMIQLDQHEGSYLSICKHYRAIYDTPCIQAESEKWQQALKSVVLYVILAPFDNEQSDLVHRISGDKKLEEIPKYKDLLKLFTTMELMRWSTLVEDYGMELRKGSLESPATDVFGSTEEGEKRWKDLKNRVVEHNIRIMAKYYTRITMKRMAQLLDLSVDESEAFLSNLVVNKTIFAKVDRLAGIINFQRPKDPNNLLNDWSQKLNSLMSLVNKTTHLIAKEEMIHNLQ.

Ala2 bears the N-acetylalanine mark. Lys92 is covalently cross-linked (Glycyl lysine isopeptide (Lys-Gly) (interchain with G-Cter in SUMO1); alternate). Residue Lys92 forms a Glycyl lysine isopeptide (Lys-Gly) (interchain with G-Cter in SUMO2); alternate linkage. Residues Lys221 and Lys368 each carry the N6-acetyllysine modification. Residues 242–420 (SICKHYRAIY…GIINFQRPKD (179 aa)) enclose the PCI domain.

This sequence belongs to the proteasome subunit p55 family. Component of the 19S proteasome regulatory particle complex. The 26S proteasome consists of a 20S core particle (CP) and two 19S regulatory subunits (RP). The regulatory particle is made of a lid composed of 9 subunits including PSMD12, a base containing 6 ATPases and few additional components. Interacts with ERCC6.

In terms of biological role, component of the 26S proteasome, a multiprotein complex involved in the ATP-dependent degradation of ubiquitinated proteins. This complex plays a key role in the maintenance of protein homeostasis by removing misfolded or damaged proteins, which could impair cellular functions, and by removing proteins whose functions are no longer required. Therefore, the proteasome participates in numerous cellular processes, including cell cycle progression, apoptosis, or DNA damage repair. The protein is 26S proteasome non-ATPase regulatory subunit 12 (PSMD12) of Pongo abelii (Sumatran orangutan).